The following is a 192-amino-acid chain: Ribosomal RNA large subunit methyltransferase E (192 aa).

Residues Gly-46, Trp-48, Asp-63, Asp-79, and Asp-102 each coordinate S-adenosyl-L-methionine. Lys-142 serves as the catalytic Proton acceptor.

Belongs to the class I-like SAM-binding methyltransferase superfamily. RNA methyltransferase RlmE family.

It localises to the cytoplasm. It catalyses the reaction uridine(2552) in 23S rRNA + S-adenosyl-L-methionine = 2'-O-methyluridine(2552) in 23S rRNA + S-adenosyl-L-homocysteine + H(+). In terms of biological role, specifically methylates the uridine in position 2552 of 23S rRNA at the 2'-O position of the ribose in the fully assembled 50S ribosomal subunit. This is Ribosomal RNA large subunit methyltransferase E from Wolbachia pipientis wMel.